The primary structure comprises 807 residues: Glycerol-3-phosphate acyltransferase (807 aa).

Positions 305-310 (CHRSHM) match the HXXXXD motif motif.

It belongs to the GPAT/DAPAT family.

The protein localises to the cell inner membrane. The enzyme catalyses sn-glycerol 3-phosphate + an acyl-CoA = a 1-acyl-sn-glycero-3-phosphate + CoA. It functions in the pathway phospholipid metabolism; CDP-diacylglycerol biosynthesis; CDP-diacylglycerol from sn-glycerol 3-phosphate: step 1/3. This Aliivibrio salmonicida (strain LFI1238) (Vibrio salmonicida (strain LFI1238)) protein is Glycerol-3-phosphate acyltransferase.